Consider the following 171-residue polypeptide: L-methionine sulfoximine/L-methionine sulfone acetyltransferase (171 aa).

Residues 1-163 form the N-acetyltransferase domain; that stretch reads MTIRFADKAD…DLTFMQLQLD (163 aa). Residues 72-74 and 82-84 contribute to the substrate site; these read RSF and EHS. Residues 85–87, 93–98, asparagine 124, and serine 133 contribute to the acetyl-CoA site; these read VYV and GKGLGR.

As to quaternary structure, homodimer.

The enzyme catalyses L-methionine sulfoximine + acetyl-CoA = N-acetyl-L-methionine sulfoximine + CoA + H(+). It carries out the reaction L-methionine sulfone + acetyl-CoA = N-acetyl-L-methionine sulfone + CoA + H(+). In terms of biological role, plays a role in the resistance against the toxic effects of L-methionine sulfoximine (MSX), a rare amino acid which inhibits glutamine synthetase (GlnA). Catalyzes the acetylation of MSX. It can also use L-methionine sulfone (MSO). Also catalyzes the acylation of free L-amino acids using an acyl-CoA as acyl donor. The chain is L-methionine sulfoximine/L-methionine sulfone acetyltransferase (yncA) from Salmonella typhimurium (strain LT2 / SGSC1412 / ATCC 700720).